Here is a 147-residue protein sequence, read N- to C-terminus: MVMGLGVLLLVFVLGLGLTPPTLAQDNSRYTHFLTQHYDAKPQGRDHRYCESIMRRRGLTSPCKDINTFIHGNKRSIKAICENKNGNPHRENLRISKSSFQVTTCKLHGGSPWPPCQYRATAGFRNVVVACENGLPVHLDQSIFRRP.

A signal peptide spans 1–24; sequence MVMGLGVLLLVFVLGLGLTPPTLA. Position 25 is a pyrrolidone carboxylic acid (Gln25). The active-site Proton acceptor is the His37. TRNA is bound by residues Arg45 and Asp46. 3 disulfide bridges follow: Cys50/Cys105, Cys63/Cys116, and Cys81/Cys131. The short motif at 55–59 is the Nucleolar localization signal element; that stretch reads RRRGL. Residues Cys105 and Val127 each coordinate tRNA. Residue His138 is the Proton donor of the active site.

This sequence belongs to the pancreatic ribonuclease family. Homodimer. Interacts with RNH1; inhibiting ANG ribonuclease activity. Interacts with PCNA.

It localises to the secreted. Its subcellular location is the nucleus. The protein resides in the nucleolus. The protein localises to the cytoplasm. It is found in the stress granule. Has weak tRNA ribonuclease activity by itself due to partial autoinhibition by its C-terminus, which folds into a short alpha-helix that partially occludes the substrate-binding site. In absence of stress, the ribonuclease activity is inhibited by RNH1 in the cytoplasm. In response to stress, dissociates from RNH1 in the cytoplasm and associates with cytoplasmic ribosomes with vacant A-sites: ribosomes directly activate the tRNA ribonuclease activity of ANG by refolding the C-terminal alpha-helix. In response to stress, the angiogenic activity of ANG is inhibited by RNH1 in the nucleus. In terms of biological role, secreted ribonuclease that can either promote or restrict cell proliferation of target cells, depending on the context. Endocytosed in target cells via its receptor PLXNB2 and translocates to the cytoplasm or nucleus. Under stress conditions, localizes to the cytoplasm and promotes the assembly of stress granules (SGs): specifically cleaves a subset of tRNAs within anticodon loops to produce tRNA-derived stress-induced fragments (tiRNAs), resulting in translation repression and inhibition of cell proliferation. tiRNas also prevent formation of apoptosome, thereby promoting cell survival. Preferentially cleaves RNAs between a pyrimidine and an adenosine residue, suggesting that it cleaves the anticodon loop of tRNA(Ala) (32-UUAGCAU-38) after positions 33 and 36. Cleaves a subset of tRNAs, including tRNA(Ala), tRNA(Glu), tRNA(Gly), tRNA(Lys), tRNA(Val), tRNA(His), tRNA(Asp) and tRNA(Sec). Under growth conditions and in differentiated cells, translocates to the nucleus and stimulates ribosomal RNA (rRNA) transcription, including that containing the initiation site sequences of 45S rRNA, thereby promoting cell growth and proliferation. Angiogenin induces vascularization of normal and malignant tissues via its ability to promote rRNA transcription. Involved in hematopoietic stem and progenitor cell (HSPC) growth and survival by promoting rRNA transcription in growth conditions and inhibiting translation in response to stress, respectively. Mediates the crosstalk between myeloid and intestinal epithelial cells to protect the intestinal epithelial barrier integrity: secreted by myeloid cells and promotes intestinal epithelial cells proliferation and survival. Also mediates osteoclast-endothelial cell crosstalk in growing bone: produced by osteoclasts and protects the neighboring vascular cells against senescence by promoting rRNA transcription. The polypeptide is Angiogenin (ANG) (Pan troglodytes (Chimpanzee)).